The primary structure comprises 214 residues: DELTA-actitoxin-Aeq1a (214 aa).

The first 19 residues, 1–19 (MSRLIIVFIVVTMICSATA), serve as a signal peptide directing secretion. A propeptide spanning residues 20–35 (LPSKKIIDEDEEDEKR) is cleaved from the precursor. The plays an important role in the hemolytic activity stretch occupies residues 38 to 47 (DVAGAVIDGA). The N-terminal region stretch occupies residues 46–65 (GASLSFDILKTVLEALGNVK). 7 residues coordinate phosphocholine: Ser89, Val122, Ser140, Pro142, Tyr168, Tyr172, and Tyr173. Residues 140 to 155 (SVPYDYNWYSNWWNVR) form a trp-rich region, which is important for the binding to lipid membrane region. The short motif at 179–181 (RGD) is the Cell attachment site, crucial for protein stability element.

Belongs to the actinoporin family. Sea anemone subfamily. As to quaternary structure, octamer or nonamer in membranes. Monomer in the soluble state.

The protein localises to the secreted. It is found in the nematocyst. It localises to the target cell membrane. Pore-forming protein that forms cations-selective hydrophilic pores of around 1 nm and causes cardiac stimulation and cytolysis. Pore formation is a multi-step process that involves specific recognition of membrane sphingomyelin (but neither cholesterol nor phosphatidylcholine) using aromatic rich region and adjacent phosphocholine (POC) binding site, firm binding to the membrane (mainly driven by hydrophobic interactions) accompanied by the transfer of the N-terminal region to the lipid-water interface and finally pore formation after oligomerization of monomers. Cytolytic effects include red blood cells hemolysis, platelet aggregation and lysis, cytotoxic and cytostatic effects on fibroblasts. Lethality in mammals has been ascribed to severe vasospasm of coronary vessels, cardiac arrhythmia, and inotropic effects. The sequence is that of DELTA-actitoxin-Aeq1a from Actinia equina (Beadlet anemone).